A 500-amino-acid polypeptide reads, in one-letter code: Na(+)/H(+) antiporter NhaB (500 aa).

Transmembrane regions (helical) follow at residues Phe-28 to Gly-50, Gly-68 to Ala-88, Leu-98 to Phe-118, Leu-121 to Leu-141, Phe-145 to Val-165, Leu-205 to Pro-225, Gln-244 to Glu-264, Val-311 to Ile-331, Phe-350 to Ile-370, Met-394 to Ile-414, Val-449 to Leu-469, and Met-477 to Ser-497.

This sequence belongs to the NhaB Na(+)/H(+) (TC 2.A.34) antiporter family.

Its subcellular location is the cell inner membrane. The catalysed reaction is 2 Na(+)(in) + 3 H(+)(out) = 2 Na(+)(out) + 3 H(+)(in). Functionally, na(+)/H(+) antiporter that extrudes sodium in exchange for external protons. This Pseudomonas aeruginosa (strain LESB58) protein is Na(+)/H(+) antiporter NhaB.